The chain runs to 46 residues: uncharacterized protein (46 aa).

This is an uncharacterized protein from Escherichia coli (Bacteriophage T4).